The chain runs to 258 residues: Protein SAWADEE HOMEODOMAIN HOMOLOG 1 (258 aa).

Positions 138–244 (AWYDVSSFLT…LVRYELDNTE (107 aa)) are SAWADEE domain. The Zn(2+) site is built by Cys191, His225, Cys230, and Cys232.

In terms of assembly, associates with the RNA polymerase IV (Pol IV) complex. Interacts with NRPD1, NRPD2, NRPD3, NRPD3B, CLSY1 and CLSY2.

The protein localises to the nucleus. Involved in RNA-directed DNA methylation (RdDM). Required for the silencing of some endogenous RdDM targets and accumulation of 24-nt siRNAs, but not for the production of Pol V-dependent transcripts. Functions in transcriptional silencing through both DNA methylation-dependent and -independent pathways. Required for both maintenance and de-novo DNA methylation. Plays a role in the recruitment of Pol IV to genomic regions associated with K9 methylated histone H3 that are targets for RdDM. This Arabidopsis thaliana (Mouse-ear cress) protein is Protein SAWADEE HOMEODOMAIN HOMOLOG 1 (SHH1).